Here is a 555-residue protein sequence, read N- to C-terminus: 2-isopropylmalate synthase (555 aa).

One can recognise a Pyruvate carboxyltransferase domain in the interval 30 to 303 (PIWCSVDLRD…DPGLDCTDIN (274 aa)). Mg(2+) contacts are provided by D39, H242, H244, and N278. Residues 437–555 (QPDARIKFVD…VSAANRVIAK (119 aa)) form a regulatory domain region.

This sequence belongs to the alpha-IPM synthase/homocitrate synthase family. LeuA type 2 subfamily. Homodimer. Mg(2+) serves as cofactor.

Its subcellular location is the cytoplasm. It carries out the reaction 3-methyl-2-oxobutanoate + acetyl-CoA + H2O = (2S)-2-isopropylmalate + CoA + H(+). Its pathway is amino-acid biosynthesis; L-leucine biosynthesis; L-leucine from 3-methyl-2-oxobutanoate: step 1/4. Its function is as follows. Catalyzes the condensation of the acetyl group of acetyl-CoA with 3-methyl-2-oxobutanoate (2-ketoisovalerate) to form 3-carboxy-3-hydroxy-4-methylpentanoate (2-isopropylmalate). The protein is 2-isopropylmalate synthase of Brucella suis biovar 1 (strain 1330).